Consider the following 98-residue polypeptide: N(2)-fixation sustaining protein CowN (98 aa).

Belongs to the CowN family.

Is required to sustain N(2)-dependent growth in the presence of low levels of carbon monoxide (CO). Probably acts by protecting the N(2) fixation ability of the nitrogenase complex, which is inactivated in the presence of CO. In Dechloromonas aromatica (strain RCB), this protein is N(2)-fixation sustaining protein CowN.